The chain runs to 125 residues: Small ribosomal subunit protein uS13 (125 aa).

The protein belongs to the universal ribosomal protein uS13 family. As to quaternary structure, part of the 30S ribosomal subunit. Forms a loose heterodimer with protein S19. Forms two bridges to the 50S subunit in the 70S ribosome.

In terms of biological role, located at the top of the head of the 30S subunit, it contacts several helices of the 16S rRNA. In the 70S ribosome it contacts the 23S rRNA (bridge B1a) and protein L5 of the 50S subunit (bridge B1b), connecting the 2 subunits; these bridges are implicated in subunit movement. Contacts the tRNAs in the A and P-sites. This chain is Small ribosomal subunit protein uS13, found in Gluconacetobacter diazotrophicus (strain ATCC 49037 / DSM 5601 / CCUG 37298 / CIP 103539 / LMG 7603 / PAl5).